A 118-amino-acid polypeptide reads, in one-letter code: UPF0102 protein RSal33209_1090 (118 aa).

The protein belongs to the UPF0102 family.

The sequence is that of UPF0102 protein RSal33209_1090 from Renibacterium salmoninarum (strain ATCC 33209 / DSM 20767 / JCM 11484 / NBRC 15589 / NCIMB 2235).